Consider the following 141-residue polypeptide: DUF35 domain-containing scaffold protein (141 aa).

Residues Cys-30, Cys-33, Cys-44, and Cys-47 each coordinate Zn(2+).

Belongs to the scaffold protein DUF35 family. Interacts with acetoacetyl-CoA thiolase and HMG-CoA synthase (HMGCS) that catalyzes the first and second step in the mevalonate pathway, respectively.

In terms of biological role, functions as a scaffold to connect the acetoacetyl-CoA thiolase and HMG-CoA synthase (HMGCS) dimers in the channeling thiolase/HMGCS complex, which allows for efficient coupling of the endergonic thiolase reaction with the exergonic HMGCS reaction. In Methanocaldococcus jannaschii (strain ATCC 43067 / DSM 2661 / JAL-1 / JCM 10045 / NBRC 100440) (Methanococcus jannaschii), this protein is DUF35 domain-containing scaffold protein.